A 145-amino-acid polypeptide reads, in one-letter code: Bacilliredoxin GK1781 (145 aa).

The protein belongs to the bacilliredoxin family.

This chain is Bacilliredoxin GK1781, found in Geobacillus kaustophilus (strain HTA426).